The following is a 349-amino-acid chain: Protein RecA (349 aa).

A phosphate-binding site is contributed by 71-75 (SSGKT). ATP contacts are provided by residues 71-76 (SSGKTT) and 102-105 (DPEY). Residue Gln196 participates in phosphate binding.

It belongs to the RecA family. In terms of assembly, polymerizes non-specifically on ssDNA to form filaments. Interacts with and activates LexA leading to autocatalytic cleavage of LexA, which derepresses the SOS regulon and activates DNA repair.

The protein resides in the cytoplasm. Functionally, required for homologous recombination (HR) and the bypass of mutagenic DNA lesions (double strand breaks, DSB) by the SOS response. Can catalyze the hydrolysis of ATP in the presence of single-stranded DNA, the ATP-dependent uptake of single-stranded DNA by duplex DNA, and the ATP-dependent hybridization of homologous single-stranded DNAs. Numerous X-ray crystals have been resolved under different conditions which indicate the flexibility of the protein, essential to its function. Gln-196 contributes to this plasticity by acting as a switch residue, which transmits the effect of nucleotide binding to the DNA-binding region. The sequence is that of Protein RecA from Mycolicibacterium smegmatis (strain ATCC 700084 / mc(2)155) (Mycobacterium smegmatis).